The following is a 1328-amino-acid chain: Retrovirus-related Pol polyprotein from transposon TNT 1-94 (1328 aa).

Positions 189 to 265 are disordered; sequence PENQGQALIT…SGQKNDDNTA (77 aa). Over residues 217 to 229 the composition is skewed to basic residues; it reads ARGKSKNRSKSRV. Residues 230-247 form a CCHC-type zinc finger; the sequence is RNCYNCNQPGHFKRDCPN. The span at 241 to 253 shows a compositional bias: basic and acidic residues; that stretch reads FKRDCPNPRKGKG. Catalysis depends on Asp297, which acts as the For protease activity. Residues 473–642 enclose the Integrase catalytic domain; it reads SSERKLNILD…IPERVWTNKE (170 aa). Residues 729-742 show a composition bias toward polar residues; sequence TIPSTSNNPTSAES. Residues 729-800 are disordered; the sequence is TIPSTSNNPT…RVESRRYPST (72 aa). The segment covering 770 to 798 has biased composition (basic and acidic residues); that stretch reads EVEHPTQGEEQHQPLRRSERPRVESRRYP.

It catalyses the reaction DNA(n) + a 2'-deoxyribonucleoside 5'-triphosphate = DNA(n+1) + diphosphate. This chain is Retrovirus-related Pol polyprotein from transposon TNT 1-94, found in Nicotiana tabacum (Common tobacco).